We begin with the raw amino-acid sequence, 126 residues long: Protein translocase subunit SecE (126 aa).

Transmembrane regions (helical) follow at residues 20–40, 42–62, and 97–117; these read WLAAFVLAAAAVVGNYLYGEM, VVVRAAGVVVLIAAALGVAAT, and IVLAVSIVMALVLWGIDGIMV.

This sequence belongs to the SecE/SEC61-gamma family. In terms of assembly, component of the Sec protein translocase complex. Heterotrimer consisting of SecY, SecE and SecG subunits. The heterotrimers can form oligomers, although 1 heterotrimer is thought to be able to translocate proteins. Interacts with the ribosome. Interacts with SecDF, and other proteins may be involved. Interacts with SecA.

Its subcellular location is the cell inner membrane. Its function is as follows. Essential subunit of the Sec protein translocation channel SecYEG. Clamps together the 2 halves of SecY. May contact the channel plug during translocation. The protein is Protein translocase subunit SecE of Vibrio alginolyticus.